Here is an 811-residue protein sequence, read N- to C-terminus: MTVKVRFDKEVREYAKGEKVKDSVLKITETALAQALEKFHRRMIVIEGDTLKKAELAGILAGASARVLSDIVGELIEKRLRDESEDKIEVLYATDALGEETFGRKRYEAFRKHFDVLAGSEVNVTAVTFKHTREILGRTYDLLILDMSYDYSPNDLGRIIETVRGGGLIFILAHPFEKWKDMWTGFHKSLVTPPYTIEDVKKRFNRRLIRKFTQHDGIYIITESGKAKKKPKKSKSQAKIRARKGVEIPEETLFPKELYEMALTRGQVEVLKAFEELVDKEGMLVLTADRGRGKSVSVGIAAIGLAVALKKRTRIVVTAPELENVQSLFRFAKRALEKLGFKPYVVEEKGLIKELYARKIGLRYYPPAEGYKKNADLYILDEAAGIHVPILHKYLNKPRVVYSSTIHGYEGAGRGFSVKFLKKAREKRSFKELHMEEPIRYAYGDPIEKWLFDVLLLDAEPVELTEEDYELIKRKEVYLEEPDLDDWFENDREDLRHFVGIYILAHYRNRPSDVALLADAPHHEARVLRLKNGKIVTAVQIAKEGGIPKNVIDKMAKGYKPRGNIIPDMMVKHHYLKEFARLKGYRIVRIATHPDAMDMGLGSKALELLEKEAREKGLDWIGSGFGASEELVRFWVRNGFAVVHLSPARNPVSGEFTAIVLKPISKKAKELIKKANDEFRIRFTEWLGDTHRELEPEIARWLFETPFGEAVDYPIHLTEIQKKRLDAFTGKVLTYDTVVDAVKPIVKLYFLDGWMKPYLDERQIKLLIYRVLQAHSWEETAKLIDRTEMFTMIEVRDIIRGLWYYYKRLLT.

ATP contacts are provided by Gln267 and Arg440. The 190-residue stretch at 474-663 (RKEVYLEEPD…GEFTAIVLKP (190 aa)) folds into the N-acetyltransferase domain. Acetyl-CoA-binding positions include 590–592 (IAT), Glu630, and Arg637.

This sequence belongs to the TmcA family.

It is found in the cytoplasm. The enzyme catalyses cytidine(34) in elongator tRNA(Met) + acetyl-CoA + ATP + H2O = N(4)-acetylcytidine(34) in elongator tRNA(Met) + ADP + phosphate + CoA + H(+). It carries out the reaction a cytidine in RNA + acetyl-CoA + ATP + H2O = an N(4)-acetylcytidine in RNA + ADP + phosphate + CoA + H(+). The catalysed reaction is a cytidine in tRNA + acetyl-CoA + ATP + H2O = an N(4)-acetylcytidine in tRNA + ADP + phosphate + CoA + H(+). It catalyses the reaction a cytidine in mRNA + acetyl-CoA + ATP + H2O = an N(4)-acetylcytidine in mRNA + ADP + phosphate + CoA + H(+). In terms of biological role, catalyzes the formation of N(4)-acetylcytidine (ac(4)C) at the wobble position of tRNA(Met), by using acetyl-CoA as an acetyl donor and ATP (or GTP). Catalyzes the formation of 404 N(4)-acetylcytidine (ac(4)C) sites in RNA, almost always on the middle C of a CCG motif. There 173 ac(4)C sites in rRNA, 35 in non-coding (nc)RNA, 119 in mRNA and 77 in tRNA. More acetylation is observed at 85 and 95 than at 65 or 75 degrees Celsius. This Thermococcus kodakarensis (strain ATCC BAA-918 / JCM 12380 / KOD1) (Pyrococcus kodakaraensis (strain KOD1)) protein is tRNA(Met) cytidine acetyltransferase TmcA.